A 530-amino-acid polypeptide reads, in one-letter code: Na(+)/H(+) antiporter NhaB (530 aa).

A run of 13 helical transmembrane segments spans residues 13–33 (FLGK…IINP), 34–54 (FVFF…EFIF), 64–84 (PLQP…TSPA), 90–110 (LVAN…IYFM), 113–133 (LLLY…LLSL), 136–156 (CLMA…AVVI), 205–225 (LLMH…VGEP), 234–254 (AGWL…PVFM), 306–326 (ALIA…VGLI), 351–371 (EEAL…AVII), 378–400 (PIIS…IANG), 450–470 (ATPN…APLI), and 481–501 (ALPY…FMLL).

This sequence belongs to the NhaB Na(+)/H(+) (TC 2.A.34) antiporter family.

The protein localises to the cell inner membrane. It carries out the reaction 2 Na(+)(in) + 3 H(+)(out) = 2 Na(+)(out) + 3 H(+)(in). Na(+)/H(+) antiporter that extrudes sodium in exchange for external protons. The protein is Na(+)/H(+) antiporter NhaB of Photobacterium profundum (strain SS9).